The sequence spans 409 residues: Pentatricopeptide repeat-containing protein At5g09450, mitochondrial (409 aa).

The transit peptide at 1–38 (MATRSLFHSLRCRLTNNGVLGSNFIRNAESSRFSKSYN) directs the protein to the mitochondrion. PPR repeat units lie at residues 155-189 (TAET…DSLT), 191-225 (GAIT…KVSP), 226-256 (DIFT…MRHD), 262-296 (GWVR…SISQ), 298-332 (EWIT…NQIL), and 333-367 (SSRS…KTTE).

It belongs to the PPR family. P subfamily.

The protein resides in the mitochondrion. In Arabidopsis thaliana (Mouse-ear cress), this protein is Pentatricopeptide repeat-containing protein At5g09450, mitochondrial.